The following is a 243-amino-acid chain: Pyridoxine 5'-phosphate synthase (243 aa).

Asn-9 is a 3-amino-2-oxopropyl phosphate binding site. 11 to 12 (DH) provides a ligand contact to 1-deoxy-D-xylulose 5-phosphate. 3-amino-2-oxopropyl phosphate is bound at residue Arg-20. The Proton acceptor role is filled by His-45. Residues Arg-47 and His-52 each contribute to the 1-deoxy-D-xylulose 5-phosphate site. Catalysis depends on Glu-72, which acts as the Proton acceptor. Position 102 (Thr-102) interacts with 1-deoxy-D-xylulose 5-phosphate. His-193 functions as the Proton donor in the catalytic mechanism. 3-amino-2-oxopropyl phosphate-binding positions include Gly-194 and 215–216 (GH).

The protein belongs to the PNP synthase family. Homooctamer; tetramer of dimers.

It localises to the cytoplasm. The catalysed reaction is 3-amino-2-oxopropyl phosphate + 1-deoxy-D-xylulose 5-phosphate = pyridoxine 5'-phosphate + phosphate + 2 H2O + H(+). Its pathway is cofactor biosynthesis; pyridoxine 5'-phosphate biosynthesis; pyridoxine 5'-phosphate from D-erythrose 4-phosphate: step 5/5. Its function is as follows. Catalyzes the complicated ring closure reaction between the two acyclic compounds 1-deoxy-D-xylulose-5-phosphate (DXP) and 3-amino-2-oxopropyl phosphate (1-amino-acetone-3-phosphate or AAP) to form pyridoxine 5'-phosphate (PNP) and inorganic phosphate. In Escherichia coli O157:H7, this protein is Pyridoxine 5'-phosphate synthase.